Reading from the N-terminus, the 99-residue chain is UPF0045 protein MTH_1187 (99 aa).

This sequence belongs to the UPF0045 family. As to quaternary structure, homotetramer.

The polypeptide is UPF0045 protein MTH_1187 (Methanothermobacter thermautotrophicus (strain ATCC 29096 / DSM 1053 / JCM 10044 / NBRC 100330 / Delta H) (Methanobacterium thermoautotrophicum)).